Here is a 525-residue protein sequence, read N- to C-terminus: 2-isopropylmalate synthase (525 aa).

The Pyruvate carboxyltransferase domain occupies 5-267 (VIIFDTTLRD…HTGIHHQEIY (263 aa)). 4 residues coordinate Mn(2+): D14, H202, H204, and N238. Residues 392-525 (RLEYFSVQSS…NNSQDMQETV (134 aa)) form a regulatory domain region.

Belongs to the alpha-IPM synthase/homocitrate synthase family. LeuA type 1 subfamily. Homodimer. Mn(2+) serves as cofactor.

The protein resides in the cytoplasm. It carries out the reaction 3-methyl-2-oxobutanoate + acetyl-CoA + H2O = (2S)-2-isopropylmalate + CoA + H(+). It functions in the pathway amino-acid biosynthesis; L-leucine biosynthesis; L-leucine from 3-methyl-2-oxobutanoate: step 1/4. Functionally, catalyzes the condensation of the acetyl group of acetyl-CoA with 3-methyl-2-oxobutanoate (2-ketoisovalerate) to form 3-carboxy-3-hydroxy-4-methylpentanoate (2-isopropylmalate). This is 2-isopropylmalate synthase from Sodalis glossinidius (strain morsitans).